The primary structure comprises 338 residues: Lipoate-protein ligase A (338 aa).

Positions 29-216 (PATQRVLFLW…AFFAHYGERV (188 aa)) constitute a BPL/LPL catalytic domain. Residues Arg71, 76–79 (GAVF), and Lys134 contribute to the ATP site. Lys134 contributes to the (R)-lipoate binding site.

The protein belongs to the LplA family. In terms of assembly, monomer.

Its subcellular location is the cytoplasm. The enzyme catalyses L-lysyl-[lipoyl-carrier protein] + (R)-lipoate + ATP = N(6)-[(R)-lipoyl]-L-lysyl-[lipoyl-carrier protein] + AMP + diphosphate + H(+). It functions in the pathway protein modification; protein lipoylation via exogenous pathway; protein N(6)-(lipoyl)lysine from lipoate: step 1/2. It participates in protein modification; protein lipoylation via exogenous pathway; protein N(6)-(lipoyl)lysine from lipoate: step 2/2. Its function is as follows. Catalyzes both the ATP-dependent activation of exogenously supplied lipoate to lipoyl-AMP and the transfer of the activated lipoyl onto the lipoyl domains of lipoate-dependent enzymes. The protein is Lipoate-protein ligase A of Escherichia coli O1:K1 / APEC.